Here is a 1687-residue protein sequence, read N- to C-terminus: Vitellogenin-2 (1687 aa).

Residues Met1–Gly15 form the signal peptide. Positions Phe24 to Ile663 constitute a Vitellogenin domain. N-linked (GlcNAc...) asparagine glycans are attached at residues Asn941, Asn945, Asn954, Asn1004, Asn1019, and Asn1083. The interval Leu1081–Gln1174 is disordered. Residues Ser1088–Ser1127 are compositionally biased toward low complexity. The N-linked (GlcNAc...) asparagine glycan is linked to Asn1142. A compositionally biased stretch (low complexity) spans Ser1148–Ser1169. N-linked (GlcNAc...) asparagine glycans are attached at residues Asn1179, Asn1257, Asn1292, Asn1342, Asn1361, Asn1366, and Asn1390. Residues Ala1417–Arg1593 enclose the VWFD domain. 2 cysteine pairs are disulfide-bonded: Cys1419/Cys1556 and Cys1442/Cys1592. N-linked (GlcNAc...) asparagine glycans are attached at residues Asn1577 and Asn1655.

Phosvitin, an egg yolk storage protein, is one of the most highly phosphorylated (10%) proteins in nature. As to expression, produced by the liver, secreted into the blood and then sequestered by receptor mediated endocytosis into growing oocytes, where it is generally cleaved, giving rise to the respective yolk components lipovitellins and phosvitin.

Its function is as follows. Precursor of the egg-yolk proteins that are sources of nutrients during early development of oviparous organisms. In Fundulus heteroclitus (Killifish), this protein is Vitellogenin-2.